Consider the following 1388-residue polypeptide: Kinesin-like protein KIF15 (1388 aa).

The tract at residues Met1–Asp25 is disordered. Positions Arg10–Asn22 are enriched in polar residues. The Kinesin motor domain occupies Ala26–Ile363. Residue Gly109–Thr116 coordinates ATP. The stretch at Val368–Ser1388 forms a coiled coil. Thr399 bears the Phosphothreonine mark. Residue Ser568 is modified to Phosphoserine. N6-acetyllysine is present on Lys1009. A phosphoserine mark is found at Ser1141 and Ser1169. The tract at residues Gln1228 to Ile1250 is disordered.

This sequence belongs to the TRAFAC class myosin-kinesin ATPase superfamily. Kinesin family. KLP2 subfamily. Interacts with MKI67 and TPX2. Expressed in testis, colon, thymus and in breast cancer.

The protein localises to the cytoplasm. It localises to the cytoskeleton. The protein resides in the spindle. Its function is as follows. Plus-end directed kinesin-like motor enzyme involved in mitotic spindle assembly. This chain is Kinesin-like protein KIF15 (KIF15), found in Homo sapiens (Human).